Reading from the N-terminus, the 160-residue chain is Large ribosomal subunit protein eL21 (160 aa).

Composition is skewed to basic and acidic residues over residues 112–123 (NDQKKKEAKEKG) and 136–146 (REAHFVRTNGK). The segment at 112–146 (NDQKKKEAKEKGTWVQLNGQPAPPREAHFVRTNGK) is disordered.

It belongs to the eukaryotic ribosomal protein eL21 family. As to quaternary structure, component of the large ribosomal subunit.

Its subcellular location is the cytoplasm. It is found in the cytosol. It localises to the endoplasmic reticulum. Its function is as follows. Component of the large ribosomal subunit. The ribosome is a large ribonucleoprotein complex responsible for the synthesis of proteins in the cell. The protein is Large ribosomal subunit protein eL21 (Rpl21) of Rattus norvegicus (Rat).